Reading from the N-terminus, the 160-residue chain is Succinate dehydrogenase assembly factor 2-A, mitochondrial (160 aa).

The N-terminal 30 residues, 1–30, are a transit peptide targeting the mitochondrion; it reads MLRQLKLTLNISRWIFMPWQRQASASSSQV.

Belongs to the SDHAF2 family. Interacts with the flavoprotein subunit within the SDH catalytic dimer.

It is found in the mitochondrion matrix. In terms of biological role, plays an essential role in the assembly of succinate dehydrogenase (SDH), an enzyme complex (also referred to as respiratory complex II) that is a component of both the tricarboxylic acid (TCA) cycle and the mitochondrial electron transport chain, and which couples the oxidation of succinate to fumarate with the reduction of ubiquinone (coenzyme Q) to ubiquinol. Required for flavinylation (covalent attachment of FAD) of the flavoprotein subunit of the SDH catalytic dimer. The polypeptide is Succinate dehydrogenase assembly factor 2-A, mitochondrial (Drosophila persimilis (Fruit fly)).